The primary structure comprises 806 residues: Mitochondrial intermediate peptidase (806 aa).

The N-terminal 29 residues, 1 to 29 (MLSRHLTVLRSACRVSHDLRVPSTQAVRK), are a transit peptide targeting the mitochondrion. His581 lines the Zn(2+) pocket. The active site involves Glu582. The Zn(2+) site is built by His585 and His588.

This sequence belongs to the peptidase M3 family. The cofactor is Zn(2+).

It is found in the mitochondrion matrix. It catalyses the reaction Release of an N-terminal octapeptide as second stage of processing of some proteins imported into the mitochondrion.. In terms of biological role, cleaves proteins, imported into the mitochondrion, to their mature size. While most mitochondrial precursor proteins are processed to the mature form in one step by mitochondrial processing peptidase (MPP), the sequential cleavage by MIP of an octapeptide after initial processing by MPP is a required step for a subgroup of nuclear-encoded precursor proteins destined for the matrix or the inner membrane. The sequence is that of Mitochondrial intermediate peptidase (OCT1) from Malassezia globosa (strain ATCC MYA-4612 / CBS 7966) (Dandruff-associated fungus).